The chain runs to 378 residues: Erythronate-4-phosphate dehydrogenase (378 aa).

Positions 45 and 66 each coordinate substrate. The NAD(+) site is built by D146 and T175. R208 is a catalytic residue. Position 232 (D232) interacts with NAD(+). E237 is an active-site residue. H254 acts as the Proton donor in catalysis. G257 provides a ligand contact to NAD(+). Y258 contributes to the substrate binding site.

It belongs to the D-isomer specific 2-hydroxyacid dehydrogenase family. PdxB subfamily. Homodimer.

The protein resides in the cytoplasm. It carries out the reaction 4-phospho-D-erythronate + NAD(+) = (R)-3-hydroxy-2-oxo-4-phosphooxybutanoate + NADH + H(+). Its pathway is cofactor biosynthesis; pyridoxine 5'-phosphate biosynthesis; pyridoxine 5'-phosphate from D-erythrose 4-phosphate: step 2/5. In terms of biological role, catalyzes the oxidation of erythronate-4-phosphate to 3-hydroxy-2-oxo-4-phosphonooxybutanoate. The sequence is that of Erythronate-4-phosphate dehydrogenase from Escherichia coli (strain K12 / MC4100 / BW2952).